A 1157-amino-acid polypeptide reads, in one-letter code: Hephaestin (1157 aa).

A signal peptide spans 1–18 (MKAGHLLWALLLMHSLWS). Over 19–1109 (IPTDGAIRNY…PIKDVEILSS (1091 aa)) the chain is Extracellular. Plastocyanin-like domains follow at residues 24 to 206 (AIRN…LITC), 218 to 366 (QRKD…VDSC), 370 to 559 (PPVD…LLVC), 569 to 717 (KQKG…VSQC), 730 to 902 (ASRV…LVIC), and 910 to 1066 (NGGR…SHEE). 2 N-linked (GlcNAc...) asparagine glycosylation sites follow: N49 and N54. The Na(+) site is built by G70 and Y73. Cu(2+)-binding residues include H126 and H128. H126 contributes to the O2 binding site. Ca(2+) is bound by residues K134, D152, and D153. N-linked (GlcNAc...) asparagine glycosylation occurs at N164. Residues C180 and C206 are joined by a disulfide bond. H186 and H188 together coordinate Cu(2+). Residue H186 participates in O2 binding. Residue N236 is glycosylated (N-linked (GlcNAc...) asparagine). S265 serves as a coordination point for Na(+). A disulfide bridge connects residues C285 and C366. Cu(2+)-binding residues include H304, C347, and H352. Residues Y416, G425, and Y428 each coordinate Na(+). A disulfide bridge links C533 with C559. A glycan (N-linked (GlcNAc...) asparagine) is linked at N587. S616 provides a ligand contact to Na(+). C636 and C717 are oxidised to a cystine. H655, C698, H703, and M708 together coordinate Cu(2+). N713 and N757 each carry an N-linked (GlcNAc...) asparagine glycan. Na(+) is bound by residues F768 and G777. A disulfide bridge links C876 with C902. N930 carries an N-linked (GlcNAc...) asparagine glycan. Residues H999, H1002, H1004, H1044, C1045, H1046, H1050, and M1055 each contribute to the Cu(2+) site. Positions 1002 and 1004 each coordinate O2. H1046 lines the O2 pocket. Residues 1110–1130 (ALIAICVLLLLIALALGGVVW) form a helical membrane-spanning segment. Residues 1131-1157 (YQHRQRKLRRNRRSILDDSFKLLSLKQ) lie on the Cytoplasmic side of the membrane. A phosphoserine mark is found at S1144, S1149, and S1154.

Belongs to the multicopper oxidase family. As to quaternary structure, part of a complex composed of SLC40A1/ferroportin, TF/transferrin and HEPH/hephaestin that transfers iron from cells to transferrin. Cu cation is required as a cofactor.

It is found in the basolateral cell membrane. It carries out the reaction 4 Fe(2+) + O2 + 4 H(+) = 4 Fe(3+) + 2 H2O. Functionally, plasma membrane ferroxidase that mediates the extracellular conversion of ferrous/Fe(2+) iron into its ferric/Fe(3+) form. Couples ferroportin which specifically exports ferrous/Fe(2+) iron from cells to transferrin that only binds and shuttles extracellular ferric/Fe(3+) iron throughout the body. By helping iron transfer from cells to blood mainly contributes to dietary iron absorption by the intestinal epithelium and more generally regulates iron levels in the body. This is Hephaestin from Mus musculus (Mouse).